The sequence spans 2055 residues: Multiple PDZ domain protein (2055 aa).

In terms of domain architecture, L27 spans methionine 1–asparagine 63. One can recognise a PDZ 1 domain in the interval isoleucine 138–serine 225. Serine 231 carries the post-translational modification Phosphoserine. Residues threonine 258 to alanine 338 enclose the PDZ 2 domain. Over residues leucine 348–serine 360 the composition is skewed to low complexity. Residues leucine 348–aspartate 372 form a disordered region. 3 consecutive PDZ domains span residues aspartate 378–glycine 464, valine 546–threonine 627, and serine 693–proline 779. A phosphoserine mark is found at serine 783 and serine 1066. A PDZ 6 domain is found at threonine 996–valine 1077. A disordered region spans residues proline 1111–alanine 1130. The PDZ 7 domain occupies arginine 1139–isoleucine 1231. The residue at position 1158 (arginine 1158) is an Omega-N-methylarginine. A compositionally biased stretch (polar residues) spans leucine 1264–glutamate 1274. A disordered region spans residues leucine 1264–aspartate 1299. Residues valine 1338 to alanine 1421 form the PDZ 8 domain. The segment covering alanine 1435–proline 1445 has biased composition (low complexity). Residues alanine 1435–serine 1459 form a disordered region. One can recognise a PDZ 9 domain in the interval glutamine 1471 to asparagine 1552. A disordered region spans residues alanine 1557–valine 1597. PDZ domains follow at residues threonine 1614–glutamate 1697 and threonine 1710–lysine 1792. The tract at residues proline 1795–lysine 1834 is disordered. Phosphoserine is present on residues serine 1803 and serine 1809. Residues serine 1803–serine 1815 are compositionally biased toward low complexity. Positions phenylalanine 1816–lysine 1834 are enriched in polar residues. 2 PDZ domains span residues threonine 1847–glycine 1933 and threonine 1972–serine 2055.

In terms of assembly, interacts with CLDN5, DLG4, GRIN1, SYNGAP1, CAMK2A and CAMK2B, HTR2A, HTR2B, HTR2C, PLEKHA1/TAPP1 and PLEKHA2/TAPP2. Interacts with F11R/JAM, CLDN1, NG2, CXADR, CRB1, MPP4 and PALS1. Interacts with FAT4 (via cytoplasmic domain). Interacts with DLL1. In terms of tissue distribution, in the brain, it is strongly expressed in the choroid plexus. Within the hippocampal formation, strongest expression was seen in the soma of CA1-4 pyramidal cells. Expressed in most neocortical regions with the strongest expression in piriform cortex and amygdaloid nuclei but also detected in the subiculum and olfactory bulb. In the cerebellum, the highest level of expression was found in Purkinje cells. Moderately expressed in the granular layer and molecular layer. Expressed in the pontine nuclei, parts of spinal trigeminal nuclei, and the principal sensory trigeminal nuclei of the metencephalon. Expressed in all thalamic and hypothalamic nuclei, and the substantia nigra (at protein level). Ubiquitously expressed.

It is found in the cell membrane. It localises to the apical cell membrane. The protein resides in the postsynaptic density. The protein localises to the cell projection. Its subcellular location is the dendrite. It is found in the cell junction. It localises to the tight junction. The protein resides in the synapse. The protein localises to the synaptosome. Member of the NMDAR signaling complex that may play a role in control of AMPAR potentiation and synaptic plasticity in excitatory synapses. Promotes clustering of HT2RC at the cell surface. The sequence is that of Multiple PDZ domain protein (Mpdz) from Mus musculus (Mouse).